A 1782-amino-acid polypeptide reads, in one-letter code: Vitellogenin receptor (1782 aa).

The signal sequence occupies residues 1-18 (MRFIVLLFICSFIYPCYV). Over 19 to 1663 (SSIGFRRISK…SINFSRNTRN (1645 aa)) the chain is Extracellular. 3 LDL-receptor class A domains span residues 35–72 (KCEDGYFQCNSGECIPVDKKCDYIDHCIDGSDEDFECD), 81–118 (TCAKDQFKCKNQECIPAAKYCDMVNDCLDESDEHDGCV), and 122–157 (NCTNKFLCTDGHCINKEWVCDGRNDCPDGNDEWNCK). Intrachain disulfides connect cysteine 36–cysteine 48, cysteine 43–cysteine 61, cysteine 55–cysteine 71, cysteine 82–cysteine 94, cysteine 89–cysteine 107, and cysteine 101–cysteine 117. Asparagine 122 carries N-linked (GlcNAc...) asparagine glycosylation. 3 disulfides stabilise this stretch: cysteine 123-cysteine 134, cysteine 129-cysteine 147, and cysteine 141-cysteine 156. Residue asparagine 159 is glycosylated (N-linked (GlcNAc...) asparagine). Residues 166–205 (SCKTENYQYMCANHRCISLKVVCDKKDDCGDGSDEGPGCT) enclose the LDL-receptor class A 4 domain. 3 cysteine pairs are disulfide-bonded: cysteine 167–cysteine 181, cysteine 176–cysteine 194, and cysteine 188–cysteine 204. 2 N-linked (GlcNAc...) asparagine glycosylation sites follow: asparagine 208 and asparagine 239. Residues 208–243 (NCSSAGCQSNCHQTPKGSVCTCKPGYKLQKDNRTCN) enclose the EGF-like 1 domain. Residues 244–283 (DIDECQAYGICDQDCMNVPGSYACTCQREYYLENDKRTCK) form the EGF-like; calcium-binding domain. 3 disulfides stabilise this stretch: cysteine 248-cysteine 258, cysteine 254-cysteine 267, and cysteine 269-cysteine 282. LDL-receptor class B repeat units follow at residues 327-374 (DYVY…DWIT), 375-416 (KNIY…LPTQ), 417-460 (GKMY…DYPN), 461-501 (ERLY…TVFQ), and 502-544 (NKLY…DHSA). Positions 552-588 (PCYSNPCSQLCMLNQNKGYTCGCTLDKKLNADKHTCQ) constitute an EGF-like 2 domain. Residues asparagine 702, asparagine 859, asparagine 896, and asparagine 923 are each glycosylated (N-linked (GlcNAc...) asparagine). Residues 889-927 (DCQKNNGNCSHVCLPSLITSFICACPPGMELSNDNRTCI) form the EGF-like 3 domain. LDL-receptor class A domains follow at residues 931–969 (ECSKNEYKCSEHNICIQRNQLCDGIENCPNGEDETSECR), 973–1009 (RCKENQFMCKNGDCIRLKDRCNSRYDCTDQSDEQNCE), 1012–1049 (KCKSDEFQCKFTETCIPKTKMCDSNPDCDDLSDEEDCR), 1052–1090 (ECTSNEFKCNNGKCIPNTFVCDNDNDCEDGEDEAAEKCY), and 1094–1131 (ACKMPKMFKCPNGDCISDSLLCNGINDCNDGSDEVHCL). 15 cysteine pairs are disulfide-bonded: cysteine 932-cysteine 945, cysteine 939-cysteine 958, cysteine 952-cysteine 968, cysteine 974-cysteine 986, cysteine 981-cysteine 999, cysteine 993-cysteine 1008, cysteine 1013-cysteine 1026, cysteine 1020-cysteine 1039, cysteine 1033-cysteine 1048, cysteine 1053-cysteine 1065, cysteine 1060-cysteine 1078, cysteine 1072-cysteine 1089, cysteine 1095-cysteine 1108, cysteine 1103-cysteine 1121, and cysteine 1115-cysteine 1130. Asparagine 1133 and asparagine 1140 each carry an N-linked (GlcNAc...) asparagine glycan. LDL-receptor class A domains lie at 1140–1177 (NCSLNEYRCLGTDICLPKNVRCDGKNDCPQSDDEQNCT), 1178–1214 (YCFENEFACDNKRCIPELWVCDKANDCGDNSDEKNCD), and 1225–1260 (ECDEFKCSVGTCLPYSKVCDGNRDCPDGSDETGKCQ). Cystine bridges form between cysteine 1141–cysteine 1154, cysteine 1148–cysteine 1167, cysteine 1161–cysteine 1176, cysteine 1179–cysteine 1191, cysteine 1186–cysteine 1204, cysteine 1198–cysteine 1213, cysteine 1226–cysteine 1236, cysteine 1231–cysteine 1249, and cysteine 1243–cysteine 1259. N-linked (GlcNAc...) asparagine glycosylation occurs at asparagine 1175. Residues 1262–1298 (ACTVNNFCKGMCYKTPAGAVCGCQSGYRLAVDMISCE) enclose the EGF-like 4 domain. LDL-receptor class B repeat units lie at residues 1385-1425 (DSVY…DWIT), 1471-1518 (RWLF…DHVK), and 1519-1561 (SKLY…FEQS). 3 N-linked (GlcNAc...) asparagine glycosylation sites follow: asparagine 1626, asparagine 1640, and asparagine 1656. Residues 1664-1684 (ISGIYSITIIVLLVSVLLLCV) form a helical membrane-spanning segment. Topologically, residues 1685-1782 (YYYYQKNKLK…ALIYFVHNSK (98 aa)) are cytoplasmic.

As to expression, expressed in ovaries of reproductive females.

The protein localises to the membrane. In terms of biological role, involved in uptake of vitellogenin by endocytosis. Expression is regulated by the juvenile hormone analog, methoprene (in vitro). This Solenopsis invicta (Red imported fire ant) protein is Vitellogenin receptor.